A 212-amino-acid chain; its full sequence is Ferric nitrobindin-like protein (212 aa).

Over residues Met1–Ser11 the composition is skewed to basic and acidic residues. The interval Met1–Asp36 is disordered. Residues Gly64 to Gly70 carry the GXWXGXG motif.

Belongs to the nitrobindin family.

In Saccharopolyspora erythraea (strain ATCC 11635 / DSM 40517 / JCM 4748 / NBRC 13426 / NCIMB 8594 / NRRL 2338), this protein is Ferric nitrobindin-like protein.